A 432-amino-acid chain; its full sequence is DEAD-box ATP-dependent RNA helicase 56 (432 aa).

A coiled-coil region spans residues Met-1–Asp-28. The Q motif signature appears at Ser-51–His-79. One can recognise a Helicase ATP-binding domain in the interval Ile-82–Ile-255. Ala-95–Thr-102 contributes to the ATP binding site. Positions Asp-202 to Asp-205 match the DEAD box motif. In terms of domain architecture, Helicase C-terminal spans Lys-283 to Thr-428.

This sequence belongs to the DEAD box helicase family. DECD subfamily. As to quaternary structure, homodimer and heterodimer with AIP2. Interacts with API5.

It localises to the nucleus. It carries out the reaction ATP + H2O = ADP + phosphate + H(+). In terms of biological role, ATP-binding RNA helicase involved in pre-mRNA splicing. Required for the export of mRNA out of the nucleus. Required for tapetal programmed cell death (PCD) and degeneration during anther development. Forms dimer with AIP2 and binds the promoter region of the cysteine protease CP1. Can complement the yeast RNA helicase SUB2. Plants silencing AIP1 and AIP2 are male sterile. The sequence is that of DEAD-box ATP-dependent RNA helicase 56 from Oryza sativa subsp. japonica (Rice).